The chain runs to 218 residues: Chymotrypsin-2 (218 aa).

Residues Ile1–Leu218 form the Peptidase S1 domain. A disulfide bridge links Cys25 with Cys40. Catalysis depends on charge relay system residues His39 and Asp84. Cystine bridges form between Cys148-Cys161 and Cys171-Cys195. Ser175 (charge relay system) is an active-site residue.

Belongs to the peptidase S1 family.

It localises to the secreted. Its subcellular location is the extracellular space. The enzyme catalyses Preferential cleavage: Tyr-|-Xaa, Trp-|-Xaa, Phe-|-Xaa, Leu-|-Xaa.. The sequence is that of Chymotrypsin-2 from Vespa crabro (European hornet).